A 313-amino-acid chain; its full sequence is tRNA-cytidine(32) 2-sulfurtransferase (313 aa).

Residues 47–52 (SGGKDS) carry the PP-loop motif motif. Residues cysteine 122, cysteine 125, and cysteine 213 each coordinate [4Fe-4S] cluster.

This sequence belongs to the TtcA family. As to quaternary structure, homodimer. It depends on Mg(2+) as a cofactor. [4Fe-4S] cluster serves as cofactor.

It localises to the cytoplasm. The enzyme catalyses cytidine(32) in tRNA + S-sulfanyl-L-cysteinyl-[cysteine desulfurase] + AH2 + ATP = 2-thiocytidine(32) in tRNA + L-cysteinyl-[cysteine desulfurase] + A + AMP + diphosphate + H(+). It participates in tRNA modification. Functionally, catalyzes the ATP-dependent 2-thiolation of cytidine in position 32 of tRNA, to form 2-thiocytidine (s(2)C32). The sulfur atoms are provided by the cysteine/cysteine desulfurase (IscS) system. This Yersinia enterocolitica serotype O:8 / biotype 1B (strain NCTC 13174 / 8081) protein is tRNA-cytidine(32) 2-sulfurtransferase.